The chain runs to 340 residues: Phosphoribosylformylglycinamidine cyclo-ligase (340 aa).

It belongs to the AIR synthase family.

The protein resides in the cytoplasm. The enzyme catalyses 2-formamido-N(1)-(5-O-phospho-beta-D-ribosyl)acetamidine + ATP = 5-amino-1-(5-phospho-beta-D-ribosyl)imidazole + ADP + phosphate + H(+). It functions in the pathway purine metabolism; IMP biosynthesis via de novo pathway; 5-amino-1-(5-phospho-D-ribosyl)imidazole from N(2)-formyl-N(1)-(5-phospho-D-ribosyl)glycinamide: step 2/2. In Streptococcus pneumoniae (strain Taiwan19F-14), this protein is Phosphoribosylformylglycinamidine cyclo-ligase.